The primary structure comprises 456 residues: MENLDEIRTDIVESTAPLLQESSSESNGGGEFNGASFSGAVFNLATTIIGAGIMALPATMKILGLIPGITIIVLMAFLTDASIEFLLRFSNIGNQRSYGGVMDDSFGKCGRIMLQVSILVSNIGVLIVYMIIIGDVLAGKNEYGIHHAGMLEGWFGISWWNRRTFVLLVTTLTVFAPLTCFKRIDSLRFTSAISVALAVVFLVITAGITIIKLFTDGLMMPRLLPNVTDLSSFWKLFTVVPVLVNAYICHYNVHSIQNELEDPSRIKPVVRSALAMCSSVYVMTSLFGYLLFGDGTLDDVLANFDTDLGIPFGSVLNDAVRFSYAAHLMLVFPVVFYPLRINIDGLIFPTAPPLTSSESDLRFGSITAGLIAVIFLGANFIPSIWDAFQFTGATAAVCIGFIFPAAVILKDRHNQATKRDKTIAICMIVLAVFSNAIAIYSDAYALFKKHTYVYPI.

Transmembrane regions (helical) follow at residues 37–57 (FSGAVFNLATTIIGAGIMALP), 58–78 (ATMKILGLIPGITIIVLMAFL), 118–138 (ILVSNIGVLIVYMIIIGDVLA), 164–184 (TFVLLVTTLTVFAPLTCFKRI), 191–211 (SAISVALAVVFLVITAGITII), 236–256 (LFTVVPVLVNAYICHYNVHSI), 273–293 (ALAMCSSVYVMTSLFGYLLFG), 328–348 (LMLVFPVVFYPLRINIDGLIF), 365–385 (SITAGLIAVIFLGANFIPSIW), 388–408 (FQFTGATAAVCIGFIFPAAVI), and 423–443 (IAICMIVLAVFSNAIAIYSDA).

The protein belongs to the amino acid/polyamine transporter 2 family. Amino acid/auxin permease (AAAP) (TC 2.A.18.6) subfamily.

Its subcellular location is the membrane. The protein is Amino acid transporter AVT6B of Arabidopsis thaliana (Mouse-ear cress).